The chain runs to 111 residues: uncharacterized protein (111 aa).

The segment at 1–85 is disordered; sequence MTGLMKAFQK…TSSREDEQKL (85 aa). The segment covering 11-23 has biased composition (polar residues); that stretch reads LSPTKRQYAEITQ. Positions 24 to 42 are enriched in low complexity; the sequence is SNSSISSSSSGSKYNDSSS. Polar residues predominate over residues 56–77; that stretch reads ARASTSTQAQKPASSQQKGGTS.

This is an uncharacterized protein from Microplitis demolitor (Parasitoid wasp).